A 266-amino-acid chain; its full sequence is MVKIAVCGAAGRMGQRIIVAAKEAGCTVSGALERPGHELVGQDAGLIAGCGALGVAISDDLNAVVDGCDVLIDFTTPKVSLKNLEACALKKKAIVIGSTGFTPEERALAAELAKDIPAVLAPNMSVGVNVCFKILKDVAKTLGDDFDVEIVELHHNKKKDAPSGTAVRMGEVVAEALGRDYNKVANYHREGICGERTKEEIGMQTVRGGDIVGEHTVYFIGMGERIEISHRAMTRDMFSRGSVRAAQWVVGKAPGLYDMQDVLGLR.

NAD(+) is bound by residues 8–13 (GAAGRM) and glutamate 33. Arginine 34 lines the NADP(+) pocket. NAD(+) contacts are provided by residues 97 to 99 (GST) and 121 to 124 (APNM). The active-site Proton donor/acceptor is the histidine 154. Histidine 155 serves as a coordination point for (S)-2,3,4,5-tetrahydrodipicolinate. Lysine 158 (proton donor) is an active-site residue. 164–165 (GT) serves as a coordination point for (S)-2,3,4,5-tetrahydrodipicolinate.

It belongs to the DapB family.

The protein resides in the cytoplasm. It catalyses the reaction (S)-2,3,4,5-tetrahydrodipicolinate + NAD(+) + H2O = (2S,4S)-4-hydroxy-2,3,4,5-tetrahydrodipicolinate + NADH + H(+). The enzyme catalyses (S)-2,3,4,5-tetrahydrodipicolinate + NADP(+) + H2O = (2S,4S)-4-hydroxy-2,3,4,5-tetrahydrodipicolinate + NADPH + H(+). Its pathway is amino-acid biosynthesis; L-lysine biosynthesis via DAP pathway; (S)-tetrahydrodipicolinate from L-aspartate: step 4/4. Functionally, catalyzes the conversion of 4-hydroxy-tetrahydrodipicolinate (HTPA) to tetrahydrodipicolinate. This Geobacter metallireducens (strain ATCC 53774 / DSM 7210 / GS-15) protein is 4-hydroxy-tetrahydrodipicolinate reductase.